The primary structure comprises 247 residues: Auxin-responsive protein IAA13 (247 aa).

The EAR-like (transcriptional repression) motif lies at 14–18 (LELGL). The segment covering 25–40 (GTAAKIGKSGGGGAWG) has biased composition (gly residues). Disordered regions lie at residues 25 to 44 (GTAA…ERGR) and 49 to 119 (KDFP…PKDV). The segment covering 62–75 (SASHAGSSPPRSSS) has biased composition (low complexity). Positions 87-98 (RMNSLVNNQATK) are enriched in polar residues. Over residues 106-119 (AGKKKVKDDEPKDV) the composition is skewed to basic and acidic residues. The region spanning 129 to 225 (VGFIKVNMDG…SVKRLRVMKT (97 aa)) is the PB1 domain.

The protein belongs to the Aux/IAA family. In terms of assembly, homodimers and heterodimers. Interacts with TPL. Preferentially expressed in stems.

It localises to the nucleus. Its function is as follows. Aux/IAA proteins are short-lived transcriptional factors that function as repressors of early auxin response genes at low auxin concentrations. Repression is thought to result from the interaction with auxin response factors (ARFs), proteins that bind to the auxin-responsive promoter element (AuxRE). Formation of heterodimers with ARF proteins may alter their ability to modulate early auxin response genes expression. This Arabidopsis thaliana (Mouse-ear cress) protein is Auxin-responsive protein IAA13 (IAA13).